The chain runs to 394 residues: MNKYKRIFLVVMDSVGIGEAPDAEQFGDLGSDTIGHIAEHMNGLQMPNMVKLGLGNIREMKGISKVEKPLGYYTKMQEKSTGKDTMTGHWEIMGLYIDTPFQVFPEGFPKELLDELEEKTGRKIIGNKPASGTEILDELGQEQMETGSLIVYTSADSVLQIAAHEEVVPLDELYKICKIARELTLDEKYMVGRVIARPFVGEPGNFTRTPNRHDYALKPFGRTVMNELKDSDYDVIAIGKISDIYDGEGVTESLRTKSNMDGMDKLVDTLNMDFTGLSFLNLVDFDALFGHRRDPQGYGEALQEYDARLPEVFEKLKEDDLLLITADHGNDPVHHGTDHTREYVPLLAYSPSMKEGGKELPLRQTFADIGATVAENFGVKMPEYGTSFLNELKK.

Residues Asp-13, Asp-286, His-291, Asp-327, His-328, and His-339 each coordinate Mn(2+).

This sequence belongs to the phosphopentomutase family. The cofactor is Mn(2+).

It is found in the cytoplasm. The catalysed reaction is 2-deoxy-alpha-D-ribose 1-phosphate = 2-deoxy-D-ribose 5-phosphate. The enzyme catalyses alpha-D-ribose 1-phosphate = D-ribose 5-phosphate. The protein operates within carbohydrate degradation; 2-deoxy-D-ribose 1-phosphate degradation; D-glyceraldehyde 3-phosphate and acetaldehyde from 2-deoxy-alpha-D-ribose 1-phosphate: step 1/2. In terms of biological role, isomerase that catalyzes the conversion of deoxy-ribose 1-phosphate (dRib-1-P) and ribose 1-phosphate (Rib-1-P) to deoxy-ribose 5-phosphate (dRib-5-P) and ribose 5-phosphate (Rib-5-P), respectively. This Bacillus cereus (strain ATCC 10987 / NRS 248) protein is Phosphopentomutase.